The primary structure comprises 344 residues: Phenylalanine--tRNA ligase alpha subunit (344 aa).

Glu256 contacts Mg(2+).

The protein belongs to the class-II aminoacyl-tRNA synthetase family. Phe-tRNA synthetase alpha subunit type 1 subfamily. In terms of assembly, tetramer of two alpha and two beta subunits. The cofactor is Mg(2+).

The protein localises to the cytoplasm. It carries out the reaction tRNA(Phe) + L-phenylalanine + ATP = L-phenylalanyl-tRNA(Phe) + AMP + diphosphate + H(+). The polypeptide is Phenylalanine--tRNA ligase alpha subunit (Bacillus mycoides (strain KBAB4) (Bacillus weihenstephanensis)).